The sequence spans 427 residues: UDP-N-acetylglucosamine 1-carboxyvinyltransferase 1 (427 aa).

24–25 (KN) is a phosphoenolpyruvate binding site. Arginine 97 serves as a coordination point for UDP-N-acetyl-alpha-D-glucosamine. Cysteine 121 acts as the Proton donor in catalysis. The residue at position 121 (cysteine 121) is a 2-(S-cysteinyl)pyruvic acid O-phosphothioketal. UDP-N-acetyl-alpha-D-glucosamine-binding positions include 126–130 (RPIDL), aspartate 309, and valine 331.

It belongs to the EPSP synthase family. MurA subfamily.

Its subcellular location is the cytoplasm. It catalyses the reaction phosphoenolpyruvate + UDP-N-acetyl-alpha-D-glucosamine = UDP-N-acetyl-3-O-(1-carboxyvinyl)-alpha-D-glucosamine + phosphate. It functions in the pathway cell wall biogenesis; peptidoglycan biosynthesis. Its function is as follows. Cell wall formation. Adds enolpyruvyl to UDP-N-acetylglucosamine. The polypeptide is UDP-N-acetylglucosamine 1-carboxyvinyltransferase 1 (Lactococcus lactis subsp. lactis (strain IL1403) (Streptococcus lactis)).